The sequence spans 567 residues: Geranylgeranyl transferase type-2 subunit alpha (567 aa).

PFTA repeat units lie at residues 44–78, 88–122, 124–158, 159–193, 207–241, and 363–397; these read LDES…RLEV, LVKA…RLPE, NWAR…QAAV, PPAE…QLHP, VLLK…RADP, and VLQS…ALDP. At serine 98 the chain carries Phosphoserine. LRR repeat units follow at residues 442 to 463, 464 to 486, 487 to 508, 509 to 530, and 534 to 555; these read DVRV…EQLL, LVTH…AALR, CLEV…TNLP, RLQE…QPLA, and RLVL…SEHL.

It belongs to the protein prenyltransferase subunit alpha family. In terms of assembly, heterotrimer composed of RABGGTA, RABGGTB and CHM; within this trimer, RABGGTA and RABGGTB form the catalytic component B, while CHM (component A) mediates peptide substrate binding. The Rab GGTase dimer (RGGT) interacts with CHM (component A) prior to Rab protein binding; the association is stabilized by geranylgeranyl pyrophosphate (GGpp). The CHM:RGGT:Rab complex is destabilized by GGpp. Interacts with non-phosphorylated form of RAB8A; phosphorylation of RAB8A disrupts this interaction.

The catalysed reaction is geranylgeranyl diphosphate + L-cysteinyl-[protein] = S-geranylgeranyl-L-cysteinyl-[protein] + diphosphate. With respect to regulation, the enzymatic reaction requires the aid of a Rab escort protein (also called component A), such as CHM. Its function is as follows. Catalyzes the transfer of a geranylgeranyl moiety from geranylgeranyl diphosphate to both cysteines of Rab proteins with the C-terminal sequence -XXCC, -XCXC and -CCXX, such as RAB1A, RAB3A, RAB5A and RAB7A. This is Geranylgeranyl transferase type-2 subunit alpha (RABGGTA) from Sus scrofa (Pig).